The chain runs to 108 residues: Peptidyl-prolyl cis-trans isomerase FKBP1A (108 aa).

The PPIase FKBP-type domain occupies 20–108; it reads GQTVVVHYVG…TFDVELLRLE (89 aa).

It belongs to the FKBP-type PPIase family. FKBP1 subfamily.

The protein resides in the cytoplasm. The catalysed reaction is [protein]-peptidylproline (omega=180) = [protein]-peptidylproline (omega=0). With respect to regulation, inhibited by both FK506 and rapamycin. Keeps in an inactive conformation TGFBR1, the TGF-beta type I serine/threonine kinase receptor, preventing TGF-beta receptor activation in absence of ligand. May modulate the RYR1 calcium channel activity. PPIases accelerate the folding of proteins. It catalyzes the cis-trans isomerization of proline imidic peptide bonds in oligopeptides. In Xenopus laevis (African clawed frog), this protein is Peptidyl-prolyl cis-trans isomerase FKBP1A (fkbp1a).